A 149-amino-acid chain; its full sequence is Putative pre-16S rRNA nuclease (149 aa).

It belongs to the YqgF nuclease family.

The protein localises to the cytoplasm. Functionally, could be a nuclease involved in processing of the 5'-end of pre-16S rRNA. The sequence is that of Putative pre-16S rRNA nuclease from Heliobacterium modesticaldum (strain ATCC 51547 / Ice1).